A 294-amino-acid chain; its full sequence is MDFQVFIITGLSGAGKSQSLRILEDLGFFCVDNIPPKLVPTLIDLCLATNGKISGLAVVIDIRTENFLEDFKEMVDTINSKNIPFKILFLEADDEVIVKRYNETRRIHPLLREGKTILESIKLEKERLQEIKTFATDIIDTSQFSLKDLKDNILKILSSFNSSVKSNFLITITSFGFKYGLPIDAHLVFDVRFLPNPFYDPKLRPFSGQAEEVKNFVLSKKEARDFIEYVKNLLDFLVPLYQEEGRNILNIAIGCTGGRHRAVVIADEIFSYLSQKYNTHLFHRDVDKDRNIAK.

ATP is bound at residue 10 to 17 (GLSGAGKS). Residue 61 to 64 (DIRT) coordinates GTP.

Belongs to the RapZ-like family.

In terms of biological role, displays ATPase and GTPase activities. The protein is Nucleotide-binding protein DICTH_1001 of Dictyoglomus thermophilum (strain ATCC 35947 / DSM 3960 / H-6-12).